Here is a 334-residue protein sequence, read N- to C-terminus: Protein-methionine-sulfoxide reductase catalytic subunit MsrP (334 aa).

A signal peptide (tat-type signal) is located at residues 1–44 (MKKNQFLKESDVTAESVFFMKRRQVLKALGISATALSLPHAAHA). Residues asparagine 88, 91–92 (YE), cysteine 146, threonine 181, asparagine 233, arginine 238, and 249–251 (GIK) each bind Mo-molybdopterin.

This sequence belongs to the MsrP family. Heterodimer of a catalytic subunit (MsrP) and a heme-binding subunit (MsrQ). Mo-molybdopterin is required as a cofactor. Predicted to be exported by the Tat system. The position of the signal peptide cleavage has not been experimentally proven.

It is found in the periplasm. It catalyses the reaction L-methionyl-[protein] + a quinone + H2O = L-methionyl-(S)-S-oxide-[protein] + a quinol. It carries out the reaction L-methionyl-[protein] + a quinone + H2O = L-methionyl-(R)-S-oxide-[protein] + a quinol. In terms of biological role, part of the MsrPQ system that repairs oxidized periplasmic proteins containing methionine sulfoxide residues (Met-O), using respiratory chain electrons. Thus protects these proteins from oxidative-stress damage caused by reactive species of oxygen and chlorine generated by the host defense mechanisms. MsrPQ is essential for the maintenance of envelope integrity under bleach stress, rescuing a wide series of structurally unrelated periplasmic proteins from methionine oxidation, including the primary periplasmic chaperone SurA and the lipoprotein Pal. The catalytic subunit MsrP is non-stereospecific, being able to reduce both (R-) and (S-) diastereoisomers of methionine sulfoxide. The sequence is that of Protein-methionine-sulfoxide reductase catalytic subunit MsrP from Escherichia coli (strain K12 / MC4100 / BW2952).